The following is a 96-amino-acid chain: Co-chaperonin GroES (96 aa).

Belongs to the GroES chaperonin family. As to quaternary structure, heptamer of 7 subunits arranged in a ring. Interacts with the chaperonin GroEL.

The protein localises to the cytoplasm. Its function is as follows. Together with the chaperonin GroEL, plays an essential role in assisting protein folding. The GroEL-GroES system forms a nano-cage that allows encapsulation of the non-native substrate proteins and provides a physical environment optimized to promote and accelerate protein folding. GroES binds to the apical surface of the GroEL ring, thereby capping the opening of the GroEL channel. This Citrifermentans bemidjiense (strain ATCC BAA-1014 / DSM 16622 / JCM 12645 / Bem) (Geobacter bemidjiensis) protein is Co-chaperonin GroES.